A 156-amino-acid chain; its full sequence is 6,7-dimethyl-8-ribityllumazine synthase (156 aa).

5-amino-6-(D-ribitylamino)uracil-binding positions include Phe22, 57–59 (AVE), and 81–83 (SVI). Position 86–87 (86–87 (GT)) interacts with (2S)-2-hydroxy-3-oxobutyl phosphate. His89 acts as the Proton donor in catalysis. A 5-amino-6-(D-ribitylamino)uracil-binding site is contributed by Phe114. Arg128 provides a ligand contact to (2S)-2-hydroxy-3-oxobutyl phosphate.

This sequence belongs to the DMRL synthase family. As to quaternary structure, forms an icosahedral capsid composed of 60 subunits, arranged as a dodecamer of pentamers.

It carries out the reaction (2S)-2-hydroxy-3-oxobutyl phosphate + 5-amino-6-(D-ribitylamino)uracil = 6,7-dimethyl-8-(1-D-ribityl)lumazine + phosphate + 2 H2O + H(+). It participates in cofactor biosynthesis; riboflavin biosynthesis; riboflavin from 2-hydroxy-3-oxobutyl phosphate and 5-amino-6-(D-ribitylamino)uracil: step 1/2. Catalyzes the formation of 6,7-dimethyl-8-ribityllumazine by condensation of 5-amino-6-(D-ribitylamino)uracil with 3,4-dihydroxy-2-butanone 4-phosphate. This is the penultimate step in the biosynthesis of riboflavin. This Vibrio vulnificus (strain CMCP6) protein is 6,7-dimethyl-8-ribityllumazine synthase.